The primary structure comprises 124 residues: Tax1-binding protein 3 (124 aa).

N-acetylserine is present on serine 2. The 98-residue stretch at 15-112 (RVEIHKLRQG…EVVRLLVTRQ (98 aa)) folds into the PDZ domain. Serine 61 is subject to Phosphoserine.

In terms of assembly, interacts (via its PDZ domain) with GLS2. Interacts (via its PDZ domain) with RTKN (via the C-terminal region); this interaction facilitates Rho-mediated activation of the FOS serum response element (SRE). Interacts (via PDZ domain) with ARHGEF16. Interacts (via PDZ domain) with KCNJ4 (via C-terminus). Competes with LIN7A for KCNJ4 binding. Interacts (via its PDZ domain) with CTNNB1; this interaction inhibits the transcriptional activity of CTNNB1. Interacts with ADGRB2.

The protein resides in the cytoplasm. Its subcellular location is the nucleus. The protein localises to the cell membrane. Functionally, may regulate a number of protein-protein interactions by competing for PDZ domain binding sites. Binds CTNNB1 and may thereby act as an inhibitor of the Wnt signaling pathway. Competes with LIN7A for KCNJ4 binding, and thereby promotes KCNJ4 internalization. May play a role in the Rho signaling pathway. This chain is Tax1-binding protein 3, found in Mus musculus (Mouse).